A 315-amino-acid polypeptide reads, in one-letter code: Cobalamin biosynthesis protein CobD (315 aa).

7 helical membrane-spanning segments follow: residues 1–21 (MLDIIIAVIIDWIIGDPYWFP), 50–70 (VFGGFIVIIVSSISFLIPFII), 79–99 (VIYHVINIFFLWTVLAAKSLH), 151–171 (DGIIAPLLFAMLGGAPLAMMY), 209–229 (VTGIIMCLVSPIIGGNIFYSI), 250–270 (AAAAASGIMLGGTNIYFGEVV), and 291–311 (IILMYSSEILFIIIYVIIICF).

It belongs to the CobD/CbiB family.

The protein localises to the cell membrane. It functions in the pathway cofactor biosynthesis; adenosylcobalamin biosynthesis. Converts cobyric acid to cobinamide by the addition of aminopropanol on the F carboxylic group. The sequence is that of Cobalamin biosynthesis protein CobD from Clostridium acetobutylicum (strain ATCC 824 / DSM 792 / JCM 1419 / IAM 19013 / LMG 5710 / NBRC 13948 / NRRL B-527 / VKM B-1787 / 2291 / W).